The sequence spans 188 residues: Inner membrane-spanning protein YciB (188 aa).

The next 5 helical transmembrane spans lie at 23–43, 49–69, 73–93, 116–133, and 149–169; these read FQKA…IGYA, AMLP…GLIF, VFVK…LVGG, WRTL…VAII, and FRLA…PFMM.

This sequence belongs to the YciB family.

The protein localises to the cell inner membrane. In terms of biological role, plays a role in cell envelope biogenesis, maintenance of cell envelope integrity and membrane homeostasis. The protein is Inner membrane-spanning protein YciB of Caulobacter vibrioides (strain ATCC 19089 / CIP 103742 / CB 15) (Caulobacter crescentus).